The primary structure comprises 474 residues: Transcription factor SOX-4 (474 aa).

Residues 1 to 10 are compositionally biased toward polar residues; the sequence is MVQQTNNAEN. Residues 1–58 form a disordered region; that stretch reads MVQQTNNAENTEALLAGESSDSGAGLELGIASSPTPGSTASTGGKADDPSWCKTPSGH. Residues 31–44 are compositionally biased toward low complexity; that stretch reads ASSPTPGSTASTGG. Residues 59-127 constitute a DNA-binding region (HMG box); the sequence is IKRPMNAFMV…KHMADYPDYK (69 aa). The residue at position 95 (Lys-95) is an N6-acetyllysine. Disordered stretches follow at residues 128–228, 262–286, and 302–416; these read YRPR…GGGK, ARTP…APGK, and LGTS…NFES. Residues 138–149 show a composition bias toward low complexity; it reads NANSSSSAAASS. Positions 158 to 189 are enriched in gly residues; that stretch reads VGGSGGGGHGGGGGGGSSNAGGGGGGASGGGA. Low complexity-rich tracts occupy residues 266–283, 304–320, 336–354, and 366–396; these read SASA…ALAA, TSSS…DPSD, APSL…AGRS, and AASP…GSSS. Positions 397–406 are enriched in acidic residues; sequence SDDEFEDDLL. Over residues 407–416 the composition is skewed to low complexity; it reads DLNPSSNFES. Positions 426–434 match the 9aaTAD motif; it reads SALDRDLDF.

Interacts with UBE2I. Interacts with HDAC1; interaction inhibits the transcriptional activator activity. Acetylation at Lys-95 by KAT5 promotes the transcription activator activity and is required during myoblast differentiation. Acetylation by KAT5 abolishes the interaction between SOX4 and HDAC1 and switches SOX4 into a transcriptional activator. Testis, brain, and heart.

It localises to the nucleus. Transcriptional activator that binds with high affinity to the T-cell enhancer motif 5'-AACAAAG-3' motif. Required for IL17A-producing Vgamma2-positive gamma-delta T-cell maturation and development, via binding to regulator loci of RORC to modulate expression. Involved in skeletal myoblast differentiation by promoting gene expression of CALD1. This is Transcription factor SOX-4 from Homo sapiens (Human).